The following is a 400-amino-acid chain: Tryptophan synthase beta chain (400 aa).

Position 91 is an N6-(pyridoxal phosphate)lysine (K91).

Belongs to the TrpB family. Tetramer of two alpha and two beta chains. The cofactor is pyridoxal 5'-phosphate.

The catalysed reaction is (1S,2R)-1-C-(indol-3-yl)glycerol 3-phosphate + L-serine = D-glyceraldehyde 3-phosphate + L-tryptophan + H2O. It functions in the pathway amino-acid biosynthesis; L-tryptophan biosynthesis; L-tryptophan from chorismate: step 5/5. In terms of biological role, the beta subunit is responsible for the synthesis of L-tryptophan from indole and L-serine. This Listeria monocytogenes serotype 4a (strain HCC23) protein is Tryptophan synthase beta chain.